The sequence spans 155 residues: Cyanate hydratase (155 aa).

Residues Arg-95, Glu-98, and Ser-121 contribute to the active site.

The protein belongs to the cyanase family.

It catalyses the reaction cyanate + hydrogencarbonate + 3 H(+) = NH4(+) + 2 CO2. Catalyzes the reaction of cyanate with bicarbonate to produce ammonia and carbon dioxide. The chain is Cyanate hydratase from Pseudomonas syringae pv. tomato (strain ATCC BAA-871 / DC3000).